Consider the following 433-residue polypeptide: Zinc carboxypeptidase A 1 (433 aa).

The N-terminal stretch at 1 to 28 is a signal peptide; sequence MVRLNSAAGSRWWAPAMAILAVALSVEA. The Peptidase M14 domain maps to 130 to 423; the sequence is DYHTLEEIHA…DSLITLLEES (294 aa). 2 residues coordinate Zn(2+): His-187 and Glu-190. A disulfide bridge links Cys-253 with Cys-276. His-312 contributes to the Zn(2+) binding site. The Proton donor/acceptor role is filled by Glu-387.

The protein belongs to the peptidase M14 family. Requires Zn(2+) as cofactor. As to expression, expressed in the posterior midgut in pupae and female adults.

It localises to the secreted. Its function is as follows. Involved in the digestion of the blood meal. This chain is Zinc carboxypeptidase A 1, found in Anopheles gambiae (African malaria mosquito).